We begin with the raw amino-acid sequence, 853 residues long: Protein translocase subunit SecA (853 aa).

ATP contacts are provided by residues Gln77, 95–99, and Asp532; that span reads GEGKT.

This sequence belongs to the SecA family. As to quaternary structure, monomer and homodimer. Part of the essential Sec protein translocation apparatus which comprises SecA, SecYEG and auxiliary proteins SecDF. Other proteins may also be involved.

It is found in the cell inner membrane. The protein localises to the cytoplasm. It catalyses the reaction ATP + H2O + cellular proteinSide 1 = ADP + phosphate + cellular proteinSide 2.. In terms of biological role, part of the Sec protein translocase complex. Interacts with the SecYEG preprotein conducting channel. Has a central role in coupling the hydrolysis of ATP to the transfer of proteins into and across the cell membrane, serving as an ATP-driven molecular motor driving the stepwise translocation of polypeptide chains across the membrane. The sequence is that of Protein translocase subunit SecA from Thermosipho melanesiensis (strain DSM 12029 / CIP 104789 / BI429).